A 147-amino-acid polypeptide reads, in one-letter code: UPF0306 protein YhbP (147 aa).

It belongs to the UPF0306 family.

The chain is UPF0306 protein YhbP from Escherichia coli O157:H7 (strain EC4115 / EHEC).